Reading from the N-terminus, the 196-residue chain is Shikimate kinase (196 aa).

21-26 (GTGKSR) lines the ATP pocket. Ser-25 lines the Mg(2+) pocket. Residues Asp-43, Arg-67, and Gly-89 each coordinate substrate. Arg-126 lines the ATP pocket. Arg-145 contributes to the substrate binding site. Arg-161 is an ATP binding site.

Belongs to the shikimate kinase family. Monomer. Requires Mg(2+) as cofactor.

The protein resides in the cytoplasm. It carries out the reaction shikimate + ATP = 3-phosphoshikimate + ADP + H(+). The protein operates within metabolic intermediate biosynthesis; chorismate biosynthesis; chorismate from D-erythrose 4-phosphate and phosphoenolpyruvate: step 5/7. Catalyzes the specific phosphorylation of the 3-hydroxyl group of shikimic acid using ATP as a cosubstrate. This is Shikimate kinase from Deinococcus radiodurans (strain ATCC 13939 / DSM 20539 / JCM 16871 / CCUG 27074 / LMG 4051 / NBRC 15346 / NCIMB 9279 / VKM B-1422 / R1).